The sequence spans 193 residues: MAAIRKKLVIVGDGACGKTCLLIVFSKDQFPEVYVPTVFENYVADIEVDSKQVELALWDTAGQEDYDRLRPLSYPDTDVILMCFSIDSPDSLENIPEKWTPEVKHFCPNVPIILVGNKKDLRNDEHTRRELAKMKQEPVKPEEGRDMANRINAFGYLECSAKTKDGVREVFEMATRAALQARKRGKKSGCLLL.

GTP-binding positions include 12–19, 30–37, 59–63, 117–120, and 160–162; these read GDGACGKT, FPEVYVPT, DTAGQ, NKKD, and SAK. Residue Tyr-34 is glycosylated ((Microbial infection) O-linked (GlcNAc) tyrosine; by Yersinia Afp18). At Cys-190 the chain carries Cysteine methyl ester. Cys-190 is lipidated: S-geranylgeranyl cysteine. Positions 191–193 are cleaved as a propeptide — removed in mature form; sequence LLL.

Belongs to the small GTPase superfamily. Rho family. (Microbial infection) Glycosylated at Tyr-34 by Yersinia ruckeri toxin Afp18. Mono-O-GlcNAcylation by Afp18 inhibits RhoA activation by guanine nucleotide exchange factors and blocks RhoA signaling.

The protein resides in the cell membrane. Functionally, regulates a signal transduction pathway linking plasma membrane receptors to the assembly of focal adhesions and actin stress fibers. In Danio rerio (Zebrafish), this protein is Rho-related GTP-binding protein RhoA-C.